The sequence spans 304 residues: Aspartate carbamoyltransferase catalytic subunit (304 aa).

Residues Arg53 and Thr54 each contribute to the carbamoyl phosphate site. Lys82 serves as a coordination point for L-aspartate. Residues Arg103, His131, and Gln134 each contribute to the carbamoyl phosphate site. The L-aspartate site is built by Arg163 and Arg224. Residues Leu263 and Pro264 each contribute to the carbamoyl phosphate site.

Belongs to the aspartate/ornithine carbamoyltransferase superfamily. ATCase family. As to quaternary structure, heterooligomer of catalytic and regulatory chains.

The catalysed reaction is carbamoyl phosphate + L-aspartate = N-carbamoyl-L-aspartate + phosphate + H(+). It functions in the pathway pyrimidine metabolism; UMP biosynthesis via de novo pathway; (S)-dihydroorotate from bicarbonate: step 2/3. Its function is as follows. Catalyzes the condensation of carbamoyl phosphate and aspartate to form carbamoyl aspartate and inorganic phosphate, the committed step in the de novo pyrimidine nucleotide biosynthesis pathway. This is Aspartate carbamoyltransferase catalytic subunit from Haloquadratum walsbyi (strain DSM 16790 / HBSQ001).